A 348-amino-acid polypeptide reads, in one-letter code: Dihydroorotase (348 aa).

Histidine 13 and histidine 15 together coordinate Zn(2+). Substrate contacts are provided by residues 15–17 and asparagine 41; that span reads HLR. The Zn(2+) site is built by lysine 99, histidine 136, and histidine 174. Lysine 99 is modified (N6-carboxylysine). Residue histidine 136 participates in substrate binding. Leucine 219 lines the substrate pocket. Residue aspartate 247 coordinates Zn(2+). The active site involves aspartate 247. Substrate is bound by residues histidine 251 and alanine 263.

The protein belongs to the metallo-dependent hydrolases superfamily. DHOase family. Class II DHOase subfamily. Homodimer. Zn(2+) is required as a cofactor.

It carries out the reaction (S)-dihydroorotate + H2O = N-carbamoyl-L-aspartate + H(+). The protein operates within pyrimidine metabolism; UMP biosynthesis via de novo pathway; (S)-dihydroorotate from bicarbonate: step 3/3. Functionally, catalyzes the reversible cyclization of carbamoyl aspartate to dihydroorotate. This is Dihydroorotase from Coxiella burnetii (strain RSA 331 / Henzerling II).